The sequence spans 1066 residues: Carbamoyl phosphate synthase large chain (1066 aa).

Residues 1–401 (MPKNNNIKKV…ALMKAVRSLE (401 aa)) are carboxyphosphate synthetic domain. Positions 129, 169, 175, 176, 208, 210, 215, 241, 242, 243, 284, and 298 each coordinate ATP. Positions 133 to 327 (KNTMEKIGEP…IAKVAAKIAL (195 aa)) constitute an ATP-grasp 1 domain. Gln284, Glu298, and Asn300 together coordinate Mg(2+). Mn(2+) is bound by residues Gln284, Glu298, and Asn300. The tract at residues 402 to 547 (QNIYSMNYGD…YSCFDSENEV (146 aa)) is oligomerization domain. The tract at residues 548–931 (DATKTKKKVL…ALYKAFLGAG (384 aa)) is carbamoyl phosphate synthetic domain. An ATP-grasp 2 domain is found at 673–863 (DEILEKCCIP…IVSLASKAVL (191 aa)). The ATP site is built by Arg709, Lys748, Leu750, Glu754, Gly779, Ile780, His781, Ser782, Gln822, and Glu834. The Mg(2+) site is built by Gln822, Glu834, and Asn836. Residues Gln822, Glu834, and Asn836 each contribute to the Mn(2+) site. The MGS-like domain maps to 932–1066 (INLPKHKKMI…ELSLIDIARI (135 aa)). The interval 932-1066 (INLPKHKKMI…ELSLIDIARI (135 aa)) is allosteric domain.

It belongs to the CarB family. As to quaternary structure, composed of two chains; the small (or glutamine) chain promotes the hydrolysis of glutamine to ammonia, which is used by the large (or ammonia) chain to synthesize carbamoyl phosphate. Tetramer of heterodimers (alpha,beta)4. Mg(2+) is required as a cofactor. Requires Mn(2+) as cofactor.

It carries out the reaction hydrogencarbonate + L-glutamine + 2 ATP + H2O = carbamoyl phosphate + L-glutamate + 2 ADP + phosphate + 2 H(+). The enzyme catalyses hydrogencarbonate + NH4(+) + 2 ATP = carbamoyl phosphate + 2 ADP + phosphate + 2 H(+). It functions in the pathway amino-acid biosynthesis; L-arginine biosynthesis; carbamoyl phosphate from bicarbonate: step 1/1. It participates in pyrimidine metabolism; UMP biosynthesis via de novo pathway; (S)-dihydroorotate from bicarbonate: step 1/3. In terms of biological role, large subunit of the glutamine-dependent carbamoyl phosphate synthetase (CPSase). CPSase catalyzes the formation of carbamoyl phosphate from the ammonia moiety of glutamine, carbonate, and phosphate donated by ATP, constituting the first step of 2 biosynthetic pathways, one leading to arginine and/or urea and the other to pyrimidine nucleotides. The large subunit (synthetase) binds the substrates ammonia (free or transferred from glutamine from the small subunit), hydrogencarbonate and ATP and carries out an ATP-coupled ligase reaction, activating hydrogencarbonate by forming carboxy phosphate which reacts with ammonia to form carbamoyl phosphate. The chain is Carbamoyl phosphate synthase large chain from Lachnoclostridium phytofermentans (strain ATCC 700394 / DSM 18823 / ISDg) (Clostridium phytofermentans).